We begin with the raw amino-acid sequence, 932 residues long: 2-oxoglutarate dehydrogenase E1 component (932 aa).

The protein belongs to the alpha-ketoglutarate dehydrogenase family. Homodimer. Part of the 2-oxoglutarate dehydrogenase (OGDH) complex composed of E1 (2-oxoglutarate dehydrogenase), E2 (dihydrolipoamide succinyltransferase) and E3 (dihydrolipoamide dehydrogenase); the complex contains multiple copies of the three enzymatic components (E1, E2 and E3). Thiamine diphosphate serves as cofactor.

The enzyme catalyses N(6)-[(R)-lipoyl]-L-lysyl-[protein] + 2-oxoglutarate + H(+) = N(6)-[(R)-S(8)-succinyldihydrolipoyl]-L-lysyl-[protein] + CO2. E1 component of the 2-oxoglutarate dehydrogenase (OGDH) complex which catalyzes the decarboxylation of 2-oxoglutarate, the first step in the conversion of 2-oxoglutarate to succinyl-CoA and CO(2). This chain is 2-oxoglutarate dehydrogenase E1 component, found in Staphylococcus aureus (strain bovine RF122 / ET3-1).